The chain runs to 282 residues: Fibrinogen-like protein A (282 aa).

The signal sequence occupies residues 1–24; it reads MFSFIMKAAILLILVGCISFCISS. The 221-residue stretch at 61-281 folds into the Fibrinogen C-terminal domain; sequence SHSPEYPRDC…FAEMKLRNRS (221 aa). 2 disulfide bridges follow: Cys70-Cys101 and Cys224-Cys240.

This chain is Fibrinogen-like protein A, found in Apostichopus parvimensis (Warty sea cucumber).